Reading from the N-terminus, the 372-residue chain is Ephrin type-A receptor 8 (372 aa).

The region spanning Ile-2–Val-263 is the Protein kinase domain. ATP is bound by residues Ile-8–Val-16 and Lys-34. Asp-127 (proton acceptor) is an active-site residue. Tyr-206 is modified (phosphotyrosine; by autocatalysis). Residues Asn-297–Leu-372 enclose the SAM domain. The PDZ-binding signature appears at Arg-370–Leu-372.

Heterotetramer upon binding of the ligand. The heterotetramer is composed of an ephrin dimer and a receptor dimer. Oligomerization is probably required to induce biological responses. May also form heterodimers with other ephrin receptors. Interacts with FYN; possible downstream effector of EPHA8 in regulation of cell adhesion. Interacts with PIK3CG; regulates integrin-mediated cell adhesion to substrate. Interacts with TIAM1; regulates clathrin-mediated endocytosis of EPHA8. Interacts with ANKS1A and ANKS1B; EPHA8 kinase activity-independent but stimulated by EPHA8 ubiquitination. Post-translationally, phosphorylated. Phosphorylation is stimulated upon binding of its ligands including EFNA2, EFNA3 and EFNA5. Autophosphorylation on Tyr-206 modulates tyrosine kinase activity. In terms of processing, ubiquitinated. Ubiquitination by CBL regulates the receptor stability and activity through proteasomal degradation. ANKS1A prevents ubiquitination and degradation. As to expression, most abundant in brain.

It is found in the cell membrane. The protein localises to the cell projection. The protein resides in the early endosome membrane. It catalyses the reaction L-tyrosyl-[protein] + ATP = O-phospho-L-tyrosyl-[protein] + ADP + H(+). Its function is as follows. Receptor tyrosine kinase which binds promiscuously GPI-anchored ephrin-A family ligands residing on adjacent cells, leading to contact-dependent bidirectional signaling into neighboring cells. The signaling pathway downstream of the receptor is referred to as forward signaling while the signaling pathway downstream of the ephrin ligand is referred to as reverse signaling. The GPI-anchored ephrin-A EFNA2, EFNA3, and EFNA5 are able to activate EPHA8 through phosphorylation. With EFNA5 may regulate integrin-mediated cell adhesion and migration on fibronectin substrate but also neurite outgrowth. During development of the nervous system also plays a role in axon guidance. Downstream effectors of the EPHA8 signaling pathway include FYN which promotes cell adhesion upon activation by EPHA8 and the MAP kinases in the stimulation of neurite outgrowth. In Rattus norvegicus (Rat), this protein is Ephrin type-A receptor 8 (Epha8).